The sequence spans 108 residues: MAEEFVQQRLANNKVTIFVKYTCPFCRNALDILNKFSFKRGAYEIVDIKEFKPENELRDYFEQITGGRTVPRIFFGKTSIGGYSDLLEIDNMDALGDILSSIGVLRTC.

A Glutaredoxin domain is found at 3–106; that stretch reads EEFVQQRLAN…DILSSIGVLR (104 aa). Cys-23 and Cys-26 form a disulfide bridge.

Belongs to the glutaredoxin family.

Its subcellular location is the virion. Its function is as follows. Displays thioltransferase and dehydroascorbate reductase activities. The polypeptide is Glutaredoxin-1 (OPG075) (Vaccinia virus (strain Copenhagen) (VACV)).